The primary structure comprises 209 residues: ATP synthase subunit delta (209 aa).

The protein belongs to the ATPase delta chain family. F-type ATPases have 2 components, F(1) - the catalytic core - and F(0) - the membrane proton channel. F(1) has five subunits: alpha(3), beta(3), gamma(1), delta(1), epsilon(1). F(0) has three main subunits: a(1), b(2) and c(10-14). The alpha and beta chains form an alternating ring which encloses part of the gamma chain. F(1) is attached to F(0) by a central stalk formed by the gamma and epsilon chains, while a peripheral stalk is formed by the delta and b chains.

It localises to the cell inner membrane. F(1)F(0) ATP synthase produces ATP from ADP in the presence of a proton or sodium gradient. F-type ATPases consist of two structural domains, F(1) containing the extramembraneous catalytic core and F(0) containing the membrane proton channel, linked together by a central stalk and a peripheral stalk. During catalysis, ATP synthesis in the catalytic domain of F(1) is coupled via a rotary mechanism of the central stalk subunits to proton translocation. Its function is as follows. This protein is part of the stalk that links CF(0) to CF(1). It either transmits conformational changes from CF(0) to CF(1) or is implicated in proton conduction. The sequence is that of ATP synthase subunit delta from Psychrobacter sp. (strain PRwf-1).